The chain runs to 621 residues: UvrABC system protein C (621 aa).

The 80-residue stretch at 13–92 (EKPGVYMMRN…IKENRPKYNV (80 aa)) folds into the GIY-YIG domain. The UVR domain occupies 205-240 (DELVRKIEEKMKAAAISMDFENAARYRDQIIALNNI).

This sequence belongs to the UvrC family. In terms of assembly, interacts with UvrB in an incision complex.

The protein localises to the cytoplasm. Functionally, the UvrABC repair system catalyzes the recognition and processing of DNA lesions. UvrC both incises the 5' and 3' sides of the lesion. The N-terminal half is responsible for the 3' incision and the C-terminal half is responsible for the 5' incision. This Alkaliphilus oremlandii (strain OhILAs) (Clostridium oremlandii (strain OhILAs)) protein is UvrABC system protein C.